A 152-amino-acid polypeptide reads, in one-letter code: 1,4-dihydroxy-2-naphthoyl-CoA hydrolase (152 aa).

D20 is an active-site residue.

Belongs to the 4-hydroxybenzoyl-CoA thioesterase family. DHNA-CoA hydrolase subfamily.

The catalysed reaction is 1,4-dihydroxy-2-naphthoyl-CoA + H2O = 1,4-dihydroxy-2-naphthoate + CoA + H(+). It functions in the pathway cofactor biosynthesis; phylloquinone biosynthesis. The protein operates within quinol/quinone metabolism; 1,4-dihydroxy-2-naphthoate biosynthesis; 1,4-dihydroxy-2-naphthoate from chorismate: step 7/7. Its function is as follows. Catalyzes the hydrolysis of 1,4-dihydroxy-2-naphthoyl-CoA (DHNA-CoA) to 1,4-dihydroxy-2-naphthoate (DHNA), a reaction involved in phylloquinone (vitamin K1) biosynthesis. In Synechococcus sp. (strain CC9311), this protein is 1,4-dihydroxy-2-naphthoyl-CoA hydrolase.